Here is a 60-residue protein sequence, read N- to C-terminus: Conotoxin Pu5.6 (60 aa).

An N-terminal signal peptide occupies residues 1-19 (MRCVPVFVILLLLIASAAS). A propeptide spanning residues 20–47 (IDAQQKTKDDAPLTSLNDNALQQHWNKR) is cleaved from the precursor.

The protein belongs to the conotoxin T superfamily. Contains 2 disulfide bonds that can be either 'C1-C3, C2-C4' or 'C1-C4, C2-C3', since these disulfide connectivities have been observed for conotoxins with cysteine framework V (for examples, see AC P0DQQ7 and AC P81755). In terms of tissue distribution, expressed by the venom duct.

The protein resides in the secreted. This chain is Conotoxin Pu5.6, found in Conus pulicarius (Flea-bitten cone).